The sequence spans 113 residues: Putative pterin-4-alpha-carbinolamine dehydratase (113 aa).

The protein belongs to the pterin-4-alpha-carbinolamine dehydratase family.

It carries out the reaction (4aS,6R)-4a-hydroxy-L-erythro-5,6,7,8-tetrahydrobiopterin = (6R)-L-erythro-6,7-dihydrobiopterin + H2O. In Rickettsia bellii (strain OSU 85-389), this protein is Putative pterin-4-alpha-carbinolamine dehydratase.